The primary structure comprises 95 residues: Ribonuclease kappa-B (95 aa).

A run of 2 helical transmembrane segments spans residues 12–32 (GLII…FFYI) and 68–88 (CWIA…QFYV).

The protein belongs to the RNase K family.

It is found in the membrane. Its activity is regulated as follows. Inhibited by Zn(2+) and Hg(2+), while it is unaffected by Ca(2+). In terms of biological role, endoribonuclease which displays activity against poly(C) and poly(U) synthetic substrates, as well as rRNA. This is Ribonuclease kappa-B from Ceratitis capitata (Mediterranean fruit fly).